Reading from the N-terminus, the 239-residue chain is Regulator of G-protein signaling 20 (239 aa).

Residues 1 to 29 form a disordered region; that stretch reads MRTANGGPRARASPSASPADPGLPEGSER. The span at 8–19 shows a compositional bias: low complexity; it reads PRARASPSASPA. In terms of domain architecture, RGS spans 113–229; the sequence is SFDNLMVTPA…MNSTVYKDLL (117 aa).

As to quaternary structure, forms a complex with G(alpha)z/i2 subunits and mu-opioid receptors; the formation of this complex results in mu-opioid receptor desensitization. Interacts with OPRM1. In terms of processing, fatty acylated. Heavily palmitoylated in the cysteine string motif. N- and O-glycosylated in synapsomal membranes. Post-translationally, serine phosphorylated in synapsomal membranes. In terms of processing, sumoylated with SUMO1, SUMO2 and SUMO3. Sumoylation increases binding to the G-proteins, G(alpha)-i2 and G(z), and interaction with mu-opioid receptors.

It is found in the membrane. Its subcellular location is the nucleus. The protein localises to the cytoplasm. Functionally, inhibits signal transduction by increasing the GTPase activity of G protein alpha subunits thereby driving them into their inactive GDP-bound form. Binds selectively to G(z)-alpha and G(alpha)-i2 subunits, accelerates their GTPase activity and regulates their signaling activities. The G(z)-alpha activity is inhibited by the phosphorylation and palmitoylation of the G-protein. Negatively regulates mu-opioid receptor-mediated activation of the G-proteins. This is Regulator of G-protein signaling 20 (Rgs20) from Mus musculus (Mouse).